The sequence spans 777 residues: 1,4-alpha-glucan branching enzyme GlgB (777 aa).

The active-site Nucleophile is D408. E461 (proton donor) is an active-site residue.

This sequence belongs to the glycosyl hydrolase 13 family. GlgB subfamily. In terms of assembly, monomer.

It catalyses the reaction Transfers a segment of a (1-&gt;4)-alpha-D-glucan chain to a primary hydroxy group in a similar glucan chain.. It participates in glycan biosynthesis; glycogen biosynthesis. Catalyzes the formation of the alpha-1,6-glucosidic linkages in glycogen by scission of a 1,4-alpha-linked oligosaccharide from growing alpha-1,4-glucan chains and the subsequent attachment of the oligosaccharide to the alpha-1,6 position. The sequence is that of 1,4-alpha-glucan branching enzyme GlgB from Actinobacillus pleuropneumoniae serotype 7 (strain AP76).